Here is a 138-residue protein sequence, read N- to C-terminus: Mu-like prophage FluMu G protein 2 (138 aa).

This sequence to phage Mu protein G.

In Haemophilus influenzae (strain ATCC 51907 / DSM 11121 / KW20 / Rd), this protein is Mu-like prophage FluMu G protein 2.